The following is a 1409-amino-acid chain: DNA-directed RNA polymerase subunit beta' (1409 aa).

Cysteine 70, cysteine 72, cysteine 85, and cysteine 88 together coordinate Zn(2+). Positions 458, 460, and 462 each coordinate Mg(2+). Cysteine 813, cysteine 887, cysteine 894, and cysteine 897 together coordinate Zn(2+). Over residues 1385–1403 (EAAELAGSTSDVSTTADAS) the composition is skewed to low complexity. Residues 1385–1409 (EAAELAGSTSDVSTTADASEGAASE) are disordered.

The protein belongs to the RNA polymerase beta' chain family. In terms of assembly, the RNAP catalytic core consists of 2 alpha, 1 beta, 1 beta' and 1 omega subunit. When a sigma factor is associated with the core the holoenzyme is formed, which can initiate transcription. Mg(2+) is required as a cofactor. Requires Zn(2+) as cofactor.

The enzyme catalyses RNA(n) + a ribonucleoside 5'-triphosphate = RNA(n+1) + diphosphate. In terms of biological role, DNA-dependent RNA polymerase catalyzes the transcription of DNA into RNA using the four ribonucleoside triphosphates as substrates. This chain is DNA-directed RNA polymerase subunit beta', found in Variovorax paradoxus (strain S110).